The following is a 396-amino-acid chain: Acetate kinase (396 aa).

N8 lines the Mg(2+) pocket. K15 is a binding site for ATP. R89 is a binding site for substrate. D146 acts as the Proton donor/acceptor in catalysis. Residues 206 to 210 (HIGNG), 283 to 285 (DMR), and 331 to 335 (GVGEN) each bind ATP. Mg(2+) is bound at residue E383.

This sequence belongs to the acetokinase family. As to quaternary structure, homodimer. The cofactor is Mg(2+). Mn(2+) is required as a cofactor.

It is found in the cytoplasm. It carries out the reaction acetate + ATP = acetyl phosphate + ADP. It participates in metabolic intermediate biosynthesis; acetyl-CoA biosynthesis; acetyl-CoA from acetate: step 1/2. In terms of biological role, catalyzes the formation of acetyl phosphate from acetate and ATP. Can also catalyze the reverse reaction. This chain is Acetate kinase, found in Streptococcus pneumoniae serotype 2 (strain D39 / NCTC 7466).